The chain runs to 422 residues: Serine--tRNA ligase (422 aa).

229–231 lines the L-serine pocket; it reads TAE. Residue 260 to 262 coordinates ATP; sequence RAE. Residue E283 coordinates L-serine. 347 to 350 serves as a coordination point for ATP; the sequence is EISS. L-serine is bound at residue S383.

It belongs to the class-II aminoacyl-tRNA synthetase family. Type-1 seryl-tRNA synthetase subfamily. As to quaternary structure, homodimer. The tRNA molecule binds across the dimer.

It is found in the cytoplasm. The enzyme catalyses tRNA(Ser) + L-serine + ATP = L-seryl-tRNA(Ser) + AMP + diphosphate + H(+). It catalyses the reaction tRNA(Sec) + L-serine + ATP = L-seryl-tRNA(Sec) + AMP + diphosphate + H(+). The protein operates within aminoacyl-tRNA biosynthesis; selenocysteinyl-tRNA(Sec) biosynthesis; L-seryl-tRNA(Sec) from L-serine and tRNA(Sec): step 1/1. Catalyzes the attachment of serine to tRNA(Ser). Is also able to aminoacylate tRNA(Sec) with serine, to form the misacylated tRNA L-seryl-tRNA(Sec), which will be further converted into selenocysteinyl-tRNA(Sec). In Halothermothrix orenii (strain H 168 / OCM 544 / DSM 9562), this protein is Serine--tRNA ligase.